We begin with the raw amino-acid sequence, 146 residues long: Large ribosomal subunit protein bL17 (146 aa).

Over residues 124-134 (EASRATRAAAS) the composition is skewed to low complexity. A disordered region spans residues 124-146 (EASRATRAAASKKAEEEAASEAE).

Belongs to the bacterial ribosomal protein bL17 family. In terms of assembly, part of the 50S ribosomal subunit. Contacts protein L32.

The protein is Large ribosomal subunit protein bL17 of Corynebacterium kroppenstedtii (strain DSM 44385 / JCM 11950 / CIP 105744 / CCUG 35717).